Here is a 374-residue protein sequence, read N- to C-terminus: Ribosomal RNA large subunit methyltransferase G (374 aa).

Belongs to the methyltransferase superfamily. RlmG family.

The protein localises to the cytoplasm. The enzyme catalyses guanosine(1835) in 23S rRNA + S-adenosyl-L-methionine = N(2)-methylguanosine(1835) in 23S rRNA + S-adenosyl-L-homocysteine + H(+). Functionally, specifically methylates the guanine in position 1835 (m2G1835) of 23S rRNA. The chain is Ribosomal RNA large subunit methyltransferase G from Pseudomonas putida (strain GB-1).